Reading from the N-terminus, the 190-residue chain is uncharacterized protein (190 aa).

The Cytoplasmic portion of the chain corresponds to 1–55; the sequence is MSRLRRFNRKILSLSSDYTHDGESDQEDVSILPLDTEEQEELIQKFETNAHITNK. A helical transmembrane segment spans residues 56-76; sequence LYINLLSILYLLYGGLLMILV. Topologically, residues 77–80 are extracellular; it reads RKSR. A helical membrane pass occupies residues 81–101; the sequence is GYIKLALLAGANSLICSCITL. Topologically, residues 102–123 are cytoplasmic; the sequence is RYDIVNDYLLFKKFKLRVSNFS. The helical transmembrane segment at 124–144 threads the bilayer; the sequence is INIINIILLVLMAWISFNHVV. Topologically, residues 145–149 are extracellular; the sequence is EDKKT. Residues 150 to 170 traverse the membrane as a helical segment; sequence VLCLQVPMFLFWVAVLVKRWA. Residues 171-190 are Cytoplasmic-facing; the sequence is RNIEDEIADLRCLKYKYKNA.

Its subcellular location is the membrane. This is an uncharacterized protein from Saccharomyces cerevisiae (strain ATCC 204508 / S288c) (Baker's yeast).